The primary structure comprises 490 residues: Cheilanthifoline synthase (490 aa).

A helical transmembrane segment spans residues 2-22 (EESLWVVTATVVVVFAIAKLL). Cys-432 is a binding site for heme.

Belongs to the cytochrome P450 family. Heme serves as cofactor. In terms of tissue distribution, expressed in roots. Detected in leaves and stems.

The protein resides in the endoplasmic reticulum membrane. It carries out the reaction (S)-scoulerine + reduced [NADPH--hemoprotein reductase] + O2 = (S)-cheilanthifoline + oxidized [NADPH--hemoprotein reductase] + 2 H2O + H(+). Its pathway is alkaloid biosynthesis. Its function is as follows. Methylenedioxy bridge-forming cytochrome P450 involved in the biosynthesis of isoquinoline alkaloids. Converts (S)-scoulerine into (R,S)-cheilanthifoline. Catalyzes an oxidative reaction that does not incorporate oxygen into the product. The chain is Cheilanthifoline synthase (CYP719A5) from Eschscholzia californica (California poppy).